The sequence spans 424 residues: Serine/threonine-protein kinase H1 (424 aa).

Residue Gly2 is the site of N-myristoyl glycine attachment. Cys3 carries the S-palmitoyl cysteine lipid modification. The tract at residues 59 to 79 (APPCPGVPNTGHTAPPSEPPR) is disordered. The 258-residue stretch at 98 to 355 (YDIKALIGRG…ALQALRHPWV (258 aa)) folds into the Protein kinase domain. Residues 104–112 (IGRGSFSRV) and Lys127 each bind ATP. Catalysis depends on Asp218, which acts as the Proton acceptor. Residues 378 to 408 (RASSRCQSTKSSQSTRSSRSTRSNKSRRVRE) form a disordered region. A phosphoserine; by autocatalysis mark is found at Ser380 and Ser381. The span at 381-398 (SRCQSTKSSQSTRSSRST) shows a compositional bias: low complexity.

Belongs to the protein kinase superfamily. CAMK Ser/Thr protein kinase family. Homodimer. In terms of processing, autophosphorylated on serine residues. Myristoylated. Required for membrane association. Prerequisite for palmitoylation to occur. Post-translationally, palmitoylated.

It is found in the golgi apparatus. The protein resides in the cytoplasm. The protein localises to the cytoskeleton. It localises to the microtubule organizing center. Its subcellular location is the centrosome. It is found in the nucleus speckle. The protein resides in the endoplasmic reticulum membrane. The protein localises to the cell membrane. It carries out the reaction L-seryl-[protein] + ATP = O-phospho-L-seryl-[protein] + ADP + H(+). It catalyses the reaction L-threonyl-[protein] + ATP = O-phospho-L-threonyl-[protein] + ADP + H(+). With respect to regulation, activity depends on Ca(2+) concentration. Serine/threonine protein kinase that may be involved in the regulation of pre-mRNA processing. It may phosphorylate components of nuclear splice factor compartments (SFC), such as non-snRNP splicing factors containing a serine/arginine-rich domain (SR proteins). Reversible phosphorylation of SR proteins may cause their release into the nucleoplasm and change their local concentration, thereby influencing alternative splicing. In Mus musculus (Mouse), this protein is Serine/threonine-protein kinase H1 (Pskh1).